We begin with the raw amino-acid sequence, 376 residues long: Salivary hyaluronidase (376 aa).

An N-terminal signal peptide occupies residues 1–16 (MNWIFHLFCAVYGIFC). Intrachain disulfides connect Cys32–Cys328 and Cys203–Cys217. Asn36, Asn55, Asn77, and Asn88 each carry an N-linked (GlcNAc...) asparagine glycan. Glu118 (proton donor) is an active-site residue. Residues Asn143, Asn153, Asn181, Asn214, Asn226, Asn248, Asn287, Asn321, Asn336, Asn356, and Asn371 are each glycosylated (N-linked (GlcNAc...) asparagine).

It belongs to the glycosyl hydrolase 56 family. In terms of processing, glycosylated; glycosylation is critical for enzymatic activity. As to expression, female salivary gland (at protein level).

It localises to the secreted. It carries out the reaction Random hydrolysis of (1-&gt;4)-linkages between N-acetyl-beta-D-glucosamine and D-glucuronate residues in hyaluronate.. Its function is as follows. Hydrolyzes high molecular weight hyaluronic acid to produce small oligosaccharides. Up-regulates expression of CSF2, CSF3, LIF, CXCL1, CXCL2 and CXCL8 in cultured human dermal microvascular endothelial cells. Promotes host neutrophil recruitment at the injection site. In terms of biological role, (Microbial infection) Probably promotes Leishmania major infection in the host. This Lutzomyia longipalpis (Sand fly) protein is Salivary hyaluronidase.